Reading from the N-terminus, the 491-residue chain is UDP-N-acetylmuramate--L-alanine ligase (491 aa).

126–132 lines the ATP pocket; the sequence is GTHGKTT.

The protein belongs to the MurCDEF family.

Its subcellular location is the cytoplasm. It catalyses the reaction UDP-N-acetyl-alpha-D-muramate + L-alanine + ATP = UDP-N-acetyl-alpha-D-muramoyl-L-alanine + ADP + phosphate + H(+). It participates in cell wall biogenesis; peptidoglycan biosynthesis. In terms of biological role, cell wall formation. The protein is UDP-N-acetylmuramate--L-alanine ligase of Escherichia coli O7:K1 (strain IAI39 / ExPEC).